The sequence spans 240 residues: Pyridoxine 5'-phosphate synthase (240 aa).

Position 6 (asparagine 6) interacts with 3-amino-2-oxopropyl phosphate. 8–9 (DH) is a 1-deoxy-D-xylulose 5-phosphate binding site. Arginine 17 lines the 3-amino-2-oxopropyl phosphate pocket. Residue histidine 42 is the Proton acceptor of the active site. Positions 44 and 49 each coordinate 1-deoxy-D-xylulose 5-phosphate. Glutamate 69 acts as the Proton acceptor in catalysis. Threonine 99 is a 1-deoxy-D-xylulose 5-phosphate binding site. Residue histidine 190 is the Proton donor of the active site. Residues glycine 191 and 212–213 (GH) contribute to the 3-amino-2-oxopropyl phosphate site.

It belongs to the PNP synthase family. In terms of assembly, homooctamer; tetramer of dimers.

The protein localises to the cytoplasm. The catalysed reaction is 3-amino-2-oxopropyl phosphate + 1-deoxy-D-xylulose 5-phosphate = pyridoxine 5'-phosphate + phosphate + 2 H2O + H(+). It functions in the pathway cofactor biosynthesis; pyridoxine 5'-phosphate biosynthesis; pyridoxine 5'-phosphate from D-erythrose 4-phosphate: step 5/5. Catalyzes the complicated ring closure reaction between the two acyclic compounds 1-deoxy-D-xylulose-5-phosphate (DXP) and 3-amino-2-oxopropyl phosphate (1-amino-acetone-3-phosphate or AAP) to form pyridoxine 5'-phosphate (PNP) and inorganic phosphate. This Pseudomonas putida (strain ATCC 700007 / DSM 6899 / JCM 31910 / BCRC 17059 / LMG 24140 / F1) protein is Pyridoxine 5'-phosphate synthase.